Consider the following 97-residue polypeptide: UPF0250 protein HD_2015 (97 aa).

It belongs to the UPF0250 family.

The polypeptide is UPF0250 protein HD_2015 (Haemophilus ducreyi (strain 35000HP / ATCC 700724)).